The primary structure comprises 821 residues: Tip elongation aberrant protein Tea4 (821 aa).

Composition is skewed to polar residues over residues 1–11 (MLHMNSASSAD) and 21–31 (DPTQQNDSTII). Residues 1-36 (MLHMNSASSADSMEIMESHFDPTQQNDSTIIESRYS) are disordered. Tyr-35 bears the Phosphotyrosine mark. Ser-36 carries the phosphoserine modification. Tyr-40 carries the post-translational modification Phosphotyrosine. The interval 51–79 (ISGENSEPQTVASQEISDSQEEDTTLTSS) is disordered. Polar residues predominate over residues 53–67 (GENSEPQTVASQEIS). Residues 130–191 (IDCNFVHAIR…PAEYIETPSE (62 aa)) form the SH3 domain. 5 disordered regions span residues 267–292 (LEIEFSDSSDSSLSAEYRSESEDHVT), 333–352 (SSTTADSKNSHSPYSKFSSA), 473–500 (DSFDTSNVTQDAPNDVEKEPISGQMPNN), 529–570 (SPRL…SSLL), and 664–697 (DASSAIPSSSISHDEDLLPRKNTEESTSSSSFSS). Low complexity predominate over residues 268–282 (EIEFSDSSDSSLSAE). Basic and acidic residues predominate over residues 283-292 (YRSESEDHVT). 2 stretches are compositionally biased toward polar residues: residues 333 to 350 (SSTTADSKNSHSPYSKFS) and 473 to 484 (DSFDTSNVTQDA). The interaction with tea1 stretch occupies residues 527-821 (LLSPRLYSSS…EMASLLNTNR (295 aa)). Residues 529–541 (SPRLYSSSTPSSP) show a composition bias toward low complexity. A compositionally biased stretch (basic and acidic residues) spans 554–563 (ENRKQADKVE). An interaction with win1 region spans residues 599–821 (KAFSQSSIDL…EMASLLNTNR (223 aa)). Residues 665–674 (ASSAIPSSSI) show a composition bias toward low complexity. The span at 675 to 687 (SHDEDLLPRKNTE) shows a compositional bias: basic and acidic residues.

As to quaternary structure, an essential component of the tea1 cell-end complex. Interacts with win1, tea1 and for3. Interacts with tip1 in the presence of tea1.

It is found in the cytoplasm. The protein resides in the cytoskeleton. Its function is as follows. Cell polarity factor essential for the bipolar localization and function of structures containing the cell-end marker tea1 during the normal cell cycle. Regulates cell polarity in complex with tea1 and together with the stress signaling MAPK cascade, contributes to cell polarity maintenance under stress conditions. Required for the localization of for3 at the cell tip specifically during initiation of bipolar growth. During the new end take off (NETO), formation of a protein complex that includes tea1, tea4 and for3 is necessary and sufficient for the establishment of cell polarity and localized actin assembly at new cell ends. This is Tip elongation aberrant protein Tea4 from Schizosaccharomyces pombe (strain 972 / ATCC 24843) (Fission yeast).